Consider the following 336-residue polypeptide: Glyceraldehyde-3-phosphate dehydrogenase (336 aa).

NAD(+)-binding positions include 12–13 (RI), D34, R78, and T121. D-glyceraldehyde 3-phosphate-binding positions include 151-153 (SCT), T182, R199, 212-213 (TG), and R235. C152 acts as the Nucleophile in catalysis. Residue N316 participates in NAD(+) binding.

Belongs to the glyceraldehyde-3-phosphate dehydrogenase family. As to quaternary structure, homotetramer.

The protein localises to the cytoplasm. The catalysed reaction is D-glyceraldehyde 3-phosphate + phosphate + NAD(+) = (2R)-3-phospho-glyceroyl phosphate + NADH + H(+). It participates in carbohydrate degradation; glycolysis; pyruvate from D-glyceraldehyde 3-phosphate: step 1/5. In terms of biological role, catalyzes the oxidative phosphorylation of glyceraldehyde 3-phosphate (G3P) to 1,3-bisphosphoglycerate (BPG) using the cofactor NAD. The first reaction step involves the formation of a hemiacetal intermediate between G3P and a cysteine residue, and this hemiacetal intermediate is then oxidized to a thioester, with concomitant reduction of NAD to NADH. The reduced NADH is then exchanged with the second NAD, and the thioester is attacked by a nucleophilic inorganic phosphate to produce BPG. This Streptococcus dysgalactiae subsp. equisimilis (Streptococcus equisimilis) protein is Glyceraldehyde-3-phosphate dehydrogenase (gap).